The chain runs to 364 residues: S-adenosylmethionine:tRNA ribosyltransferase-isomerase (364 aa).

It belongs to the QueA family. Monomer.

It localises to the cytoplasm. It catalyses the reaction 7-aminomethyl-7-carbaguanosine(34) in tRNA + S-adenosyl-L-methionine = epoxyqueuosine(34) in tRNA + adenine + L-methionine + 2 H(+). Its pathway is tRNA modification; tRNA-queuosine biosynthesis. Its function is as follows. Transfers and isomerizes the ribose moiety from AdoMet to the 7-aminomethyl group of 7-deazaguanine (preQ1-tRNA) to give epoxyqueuosine (oQ-tRNA). The polypeptide is S-adenosylmethionine:tRNA ribosyltransferase-isomerase (Bradyrhizobium sp. (strain BTAi1 / ATCC BAA-1182)).